An 89-amino-acid polypeptide reads, in one-letter code: Acyl-CoA-binding protein (89 aa).

In terms of domain architecture, ACB spans 3–88 (LKEEFEEHAE…VKQLFEAAGS (86 aa)). An acyl-CoA-binding positions include 30–34 (YGLYK), lysine 56, and tyrosine 75.

Belongs to the ACBP family.

Functionally, binds medium- and long-chain acyl-CoA esters with very high affinity and may function as an intracellular carrier of acyl-CoA esters. The chain is Acyl-CoA-binding protein from Gossypium hirsutum (Upland cotton).